The following is a 601-amino-acid chain: MSKVRIYTLAKDLGVDNAKMLEILDGLGVAYKSVSSTIEEDTVELIKQILEEEGHTASAEPAPAQASGSPASPAQTEAQEAPQPTATATAEREPAAPPARELPHRAPVVTIMGHVDHGKTSLLDYIRKTKVAAKEAGGITQHVGAFEAKTSKGKIVFIDTPGHEAFTTIRARGANVADIAVIVIAADDSLMPQTREAIAHAQAAKVPMIVAINKVDLPQADPEKVKTDLTQLNLVPEEYGGDLIVVPVSAKTGEGVEDLLEYISLTAELEDLRADPQGEFSGVIIESRVDRQAGVLATVMVQEGTLHVGDFLVVGENYGKVKAMTDSNGGRIKEAGPSTPVQVLGFSEAPSSGEKVVSVKNEHAARELVAQRVETRREAENARVQRKKTLEEMMGPLGETRTVNLILRADTQGSLEAIQGILARKETEDVKLNVMLAGIGSPTEGDVLLASTADATILCFNVTASGSVKKAAEQRDIELKSFRIIYELIDEVDRLIKGNVEPVFEERPLGRAEVRMVIRHPKSGNIAGSYVTDGLLRRNAKARVLRGKQVVYEGTIVGLKRFKDDVREVQAGYECGVNLDWNDVQEGDIIEASELVEVAQA.

The tract at residues 54–101 (GHTASAEPAPAQASGSPASPAQTEAQEAPQPTATATAEREPAAPPARE) is disordered. The span at 57-89 (ASAEPAPAQASGSPASPAQTEAQEAPQPTATAT) shows a compositional bias: low complexity. One can recognise a tr-type G domain in the interval 104 to 273 (HRAPVVTIMG…SLTAELEDLR (170 aa)). The G1 stretch occupies residues 113 to 120 (GHVDHGKT). 113–120 (GHVDHGKT) serves as a coordination point for GTP. Residues 138–142 (GITQH) form a G2 region. Residues 159-162 (DTPG) form a G3 region. Residues 159–163 (DTPGH) and 213–216 (NKVD) contribute to the GTP site. The interval 213 to 216 (NKVD) is G4. Residues 249–251 (SAK) are G5.

It belongs to the TRAFAC class translation factor GTPase superfamily. Classic translation factor GTPase family. IF-2 subfamily.

It is found in the cytoplasm. In terms of biological role, one of the essential components for the initiation of protein synthesis. Protects formylmethionyl-tRNA from spontaneous hydrolysis and promotes its binding to the 30S ribosomal subunits. Also involved in the hydrolysis of GTP during the formation of the 70S ribosomal complex. This Deinococcus geothermalis (strain DSM 11300 / CIP 105573 / AG-3a) protein is Translation initiation factor IF-2.